The sequence spans 155 residues: Small ribosomal subunit protein uS7cz/uS7cy (155 aa).

This sequence belongs to the universal ribosomal protein uS7 family. In terms of assembly, part of the 30S ribosomal subunit.

It localises to the plastid. Its subcellular location is the chloroplast. In terms of biological role, one of the primary rRNA binding proteins, it binds directly to 16S rRNA where it nucleates assembly of the head domain of the 30S subunit. The chain is Small ribosomal subunit protein uS7cz/uS7cy (rps7-A) from Lemna minor (Common duckweed).